The primary structure comprises 362 residues: 3-dehydroquinate synthase (362 aa).

NAD(+)-binding positions include 72 to 77, 106 to 110, 130 to 131, lysine 143, lysine 152, and 170 to 173; these read DGEQYK, GVVGD, TT, and CLKT. Zn(2+) contacts are provided by glutamate 185, histidine 248, and histidine 265.

Belongs to the sugar phosphate cyclases superfamily. Dehydroquinate synthase family. The cofactor is Co(2+). It depends on Zn(2+) as a cofactor. NAD(+) is required as a cofactor.

Its subcellular location is the cytoplasm. It carries out the reaction 7-phospho-2-dehydro-3-deoxy-D-arabino-heptonate = 3-dehydroquinate + phosphate. It participates in metabolic intermediate biosynthesis; chorismate biosynthesis; chorismate from D-erythrose 4-phosphate and phosphoenolpyruvate: step 2/7. Its function is as follows. Catalyzes the conversion of 3-deoxy-D-arabino-heptulosonate 7-phosphate (DAHP) to dehydroquinate (DHQ). In Aliivibrio salmonicida (strain LFI1238) (Vibrio salmonicida (strain LFI1238)), this protein is 3-dehydroquinate synthase.